The following is a 532-amino-acid chain: MAPSSPRPALPALLVLLGALFPGPGNAQTSVSPPKVILPRGGSVLVTCSTSCDQPTLLGIETPLPKKELLLLGNNQKVYELSNVQEDSQPMCYSNCPDGQSTAKTFLTVYWTPERVELAPLPSWQPVGKDLTLRCQVEGGAPRANLIVVLLRGEEELKREPAVGEPAEVTTTVPVEKDHHGANFLCRTELDLRPQGLKLFENTSAPYQLQTFVLPATPPQLVSPRVLEVDTQGTVVCSLDGLFPVSEAQVHLALGDQRLNPTVTYGNDSFSAKASVSVTAEDEGTQWLTCAVILGTQSQETLQTVTIYSFPAPNVILTKPEVSEGTEVTVKCEAHPRAKVTLNGVPAQPPGPRTQFLLKATPEDNGRSFSCSATLEVAGQLIHKNQTRELRVLYGPRLDERDCPGNWTWPENSQQTPMCQAWGNPLPELKCLKDGTFPLPVGESVTVTRDLEGTYLCRARSTQGEVTREVTVNVLSPRYEFVIIAVVAAAVIMGTAGLSTYLYNRQRKIRKYRLQQAQKGTPMKPNTQATPP.

The first 27 residues, 1–27, serve as a signal peptide directing secretion; that stretch reads MAPSSPRPALPALLVLLGALFPGPGNA. At 28–480 the chain is on the extracellular side; the sequence is QTSVSPPKVI…TVNVLSPRYE (453 aa). Ig-like C2-type domains lie at 41 to 103 and 128 to 193; these read GGSV…QSTA and GKDL…LDLR. Intrachain disulfides connect cysteine 48-cysteine 92, cysteine 52-cysteine 96, and cysteine 135-cysteine 186. The Cell attachment site; atypical signature appears at 152 to 154; the sequence is RGE. N-linked (GlcNAc...) asparagine glycans are attached at residues asparagine 202 and asparagine 267. 2 Ig-like C2-type domains span residues 230-297 and 325-378; these read DTQG…LGTQ and GTEV…LEVA. Cystine bridges form between cysteine 237–cysteine 290 and cysteine 332–cysteine 371. N-linked (GlcNAc...) asparagine glycosylation is found at asparagine 385 and asparagine 406. Intrachain disulfides connect cysteine 403-cysteine 419, cysteine 419-cysteine 457, and cysteine 431-cysteine 457. One can recognise an Ig-like C2-type 5 domain in the interval 412–464; that stretch reads NSQQTPMCQAWGNPLPELKCLKDGTFPLPVGESVTVTRDLEGTYLCRARSTQG. A helical membrane pass occupies residues 481–503; the sequence is FVIIAVVAAAVIMGTAGLSTYLY. The Cytoplasmic portion of the chain corresponds to 504 to 532; that stretch reads NRQRKIRKYRLQQAQKGTPMKPNTQATPP. Threonine 521 and threonine 530 each carry phosphothreonine.

It belongs to the immunoglobulin superfamily. ICAM family. In terms of assembly, homodimer. Interacts with MUC1 and promotes cell aggregation in epithelial cells. Interacts with ARHGEF26/SGEF. Interacts (on T cell side) with CD81, CD247 and CD9 at immunological synapses between antigen-presenting cells and T cells. Monoubiquitinated, which is promoted by MARCH9 and leads to endocytosis.

It localises to the membrane. Functionally, ICAM proteins are ligands for the leukocyte adhesion protein LFA-1 (integrin alpha-L/beta-2). During leukocyte trans-endothelial migration, ICAM1 engagement promotes the assembly of endothelial apical cups through ARHGEF26/SGEF and RHOG activation. This Gorilla gorilla gorilla (Western lowland gorilla) protein is Intercellular adhesion molecule 1 (ICAM1).